Consider the following 519-residue polypeptide: Glucose-1-phosphate adenylyltransferase large subunit 3, chloroplastic/amyloplastic (519 aa).

Residues 1 to 74 (MQFSSVFPLE…DAGPDTLHVR (74 aa)) constitute a chloroplast transit peptide.

Belongs to the bacterial/plant glucose-1-phosphate adenylyltransferase family. As to quaternary structure, heterotetramer composed of two small and two large subunits. Expressed in stems.

The protein localises to the plastid. The protein resides in the chloroplast. The catalysed reaction is alpha-D-glucose 1-phosphate + ATP + H(+) = ADP-alpha-D-glucose + diphosphate. The protein operates within glycan biosynthesis; starch biosynthesis. Its activity is regulated as follows. Activated by 3'phosphoglycerate, inhibited by orthophosphate. Allosteric regulation. In terms of biological role, involved in synthesis of starch. Catalyzes the synthesis of ADP-glucose, a molecule that serves as an activated glycosyl donor for alpha-1,4-glucan synthesis. Essential for starch synthesis in leaf chloroplasts. This Oryza sativa subsp. japonica (Rice) protein is Glucose-1-phosphate adenylyltransferase large subunit 3, chloroplastic/amyloplastic.